The primary structure comprises 172 residues: Protein LOL2 (172 aa).

Putative zinc finger stretches follow at residues 4-34, 44-74, and 82-112; these read QIVC…VSST, HLIC…VNLV, and HLNC…ITNT.

Its subcellular location is the nucleus. Its function is as follows. Putative zinc finger that may be involved in programmed cell death and defense response. The protein is Protein LOL2 (LOL2) of Oryza sativa subsp. japonica (Rice).